Here is a 359-residue protein sequence, read N- to C-terminus: Maleylacetate reductase 2 (359 aa).

This sequence belongs to the iron-containing alcohol dehydrogenase family. As to quaternary structure, homodimer.

The catalysed reaction is 3-oxoadipate + NAD(+) = maleylacetate + NADH + H(+). It catalyses the reaction 3-oxoadipate + NADP(+) = maleylacetate + NADPH + H(+). It participates in aromatic compound metabolism; 3-chlorocatechol degradation. Inhibited by p-chloromercuribenzoate and by 3-oxoadipate, and, in a temperature-dependent manner, by manganese. Plays a major role in the degradation of chloroaromatic compounds by channeling maleylacetate and some of its substituted derivatives into the 3-oxoadipate pathway. This enzyme converts maleylacetate and 2-chloromaleylacetate with similar efficiencies. NADH is preferred to NADPH as the cosubstrate. The sequence is that of Maleylacetate reductase 2 (tfdFII) from Cupriavidus pinatubonensis (strain JMP 134 / LMG 1197) (Cupriavidus necator (strain JMP 134)).